Here is a 193-residue protein sequence, read N- to C-terminus: MADEAETLDAAHGATDAAHGAADAAHASSPGMPQLDFATFPNQIFWLVLTLLAIYFVLTKIALPRISSVIAERQGTLTNDLAAAEDLKRQAAEAEESYNTALANARAEASRIAQETRDEIQAQTQVEIDKADAQIAARTAEGEARIAEIEAGAIATAEEVARDVATEIVRAFGPGQDVDAAAVADAVANRVRG.

A helical membrane pass occupies residues 44–64 (IFWLVLTLLAIYFVLTKIALP).

This sequence belongs to the ATPase B chain family. As to quaternary structure, F-type ATPases have 2 components, F(1) - the catalytic core - and F(0) - the membrane proton channel. F(1) has five subunits: alpha(3), beta(3), gamma(1), delta(1), epsilon(1). F(0) has three main subunits: a(1), b(2) and c(10-14). The alpha and beta chains form an alternating ring which encloses part of the gamma chain. F(1) is attached to F(0) by a central stalk formed by the gamma and epsilon chains, while a peripheral stalk is formed by the delta and b chains.

Its subcellular location is the cell inner membrane. F(1)F(0) ATP synthase produces ATP from ADP in the presence of a proton or sodium gradient. F-type ATPases consist of two structural domains, F(1) containing the extramembraneous catalytic core and F(0) containing the membrane proton channel, linked together by a central stalk and a peripheral stalk. During catalysis, ATP synthesis in the catalytic domain of F(1) is coupled via a rotary mechanism of the central stalk subunits to proton translocation. Its function is as follows. Component of the F(0) channel, it forms part of the peripheral stalk, linking F(1) to F(0). The b'-subunit is a diverged and duplicated form of b found in plants and photosynthetic bacteria. This chain is ATP synthase subunit b 2 (atpF2), found in Jannaschia sp. (strain CCS1).